Here is a 528-residue protein sequence, read N- to C-terminus: Autophagy-related protein 22 (528 aa).

Topologically, residues 1-98 (MSYGTINDMN…IFVDTSSFAL (98 aa)) are cytoplasmic. The helical transmembrane segment at 99–119 (YVFSLSVLFQTIIVISVSGIV) threads the bilayer. The Vacuolar portion of the chain corresponds to 120-130 (DLWGSVKFKGR). A helical transmembrane segment spans residues 131-151 (ILVWFGIVGALSTVAISKLND). Over 152-153 (TQ) the chain is Cytoplasmic. A helical transmembrane segment spans residues 154–174 (IYSLAGLYIVANGCFGVINVV). Topologically, residues 175 to 210 (GNSLLPIFVKDSLKCQSQGAYEPDKVDSLTTVISGR) are vacuolar. Residues 211–231 (GASLGYSSALIVQIVSMFLVA) traverse the membrane as a helical segment. The Cytoplasmic segment spans residues 232–241 (SKKGSKQDVQ). The chain crosses the membrane as a helical span at residues 242–262 (VAVLFVGIWWFVWQLPMIWLI). Residues 263–318 (DDVTIPIRVDDSTLASARSPYPGEQDALGQLNWKNYLSYGWVSLFESFKHARLLKD) are Vacuolar-facing. S278 carries the phosphoserine modification. Residues 319–339 (VMIFLIAWFIISDSITTINST) traverse the membrane as a helical segment. The Cytoplasmic portion of the chain corresponds to 340-352 (AVLFSKAELHMST). Residues 353-373 (LNLIMISVLTVVNAMLGAFMI) traverse the membrane as a helical segment. Residues 374 to 388 (PQFLATKFRWTSSQT) lie on the Vacuolar side of the membrane. A helical membrane pass occupies residues 389–409 (LMYIIIWASFIPFYGILGFFF). At 410-417 (NAFGLKHK) the chain is on the cytoplasmic side. A helical transmembrane segment spans residues 418–438 (FEMFLLAIWYGLSLGGLSAVS). At 439–485 (RSVFSLIVPPGKESTFFSMFSITDKGSSILGPFLVGLLTDKTHNIRY) the chain is on the vacuolar side. The helical transmembrane segment at 486–506 (SFYFFFLLLMLSLPVLNCLDV) threads the bilayer. Residues 507–528 (KRGRREAEELSQVLPESERRLD) lie on the Cytoplasmic side of the membrane.

Belongs to the ATG22 family.

Its subcellular location is the vacuole membrane. Its function is as follows. Vacuolar effluxer which mediate the efflux of leucine and other amino acids resulting from autophagic degradation. The release of autophagic amino acids allows the maintenance of protein synthesis and viability during nitrogen starvation. In Saccharomyces cerevisiae (strain ATCC 204508 / S288c) (Baker's yeast), this protein is Autophagy-related protein 22 (ATG22).